The primary structure comprises 325 residues: Protease HtpX homolog (325 aa).

Residues 20–40 (IGYLLGGGGGMMIALVIAVAM) traverse the membrane as a helical segment. Position 130 (His-130) interacts with Zn(2+). Glu-131 is an active-site residue. Position 134 (His-134) interacts with Zn(2+). The next 2 membrane-spanning stretches (helical) occupy residues 145–165 (IVAT…FLGG) and 173–193 (VMGV…AMIV). Position 202 (Glu-202) interacts with Zn(2+). The segment at 288–325 (AMTARAAAPSQNSGPWGQRSDNAGGNSNGGSRYRGPWS) is disordered. Over residues 306 to 325 (RSDNAGGNSNGGSRYRGPWS) the composition is skewed to low complexity.

This sequence belongs to the peptidase M48B family. Zn(2+) is required as a cofactor.

The protein resides in the cell inner membrane. This Brucella suis (strain ATCC 23445 / NCTC 10510) protein is Protease HtpX homolog.